The following is a 117-amino-acid chain: MMLEPSIDKLLDQVDSKYSLVVLEAKRAHELRDKERPTKEFKAVKNTLRALEEIADGTVKIHPSPELKRETLVEKRELERLQAKMKEQLIKEQIAKEEAEEEAKQKNSRAAKAAAAE.

The span at 96-105 (KEEAEEEAKQ) shows a compositional bias: basic and acidic residues. The interval 96-117 (KEEAEEEAKQKNSRAAKAAAAE) is disordered. The segment covering 108–117 (SRAAKAAAAE) has biased composition (low complexity).

It belongs to the RNA polymerase subunit omega family. As to quaternary structure, the RNAP catalytic core consists of 2 alpha, 1 beta, 1 beta' and 1 omega subunit. When a sigma factor is associated with the core the holoenzyme is formed, which can initiate transcription.

It catalyses the reaction RNA(n) + a ribonucleoside 5'-triphosphate = RNA(n+1) + diphosphate. Functionally, promotes RNA polymerase assembly. Latches the N- and C-terminal regions of the beta' subunit thereby facilitating its interaction with the beta and alpha subunits. In Lactococcus lactis subsp. lactis (strain IL1403) (Streptococcus lactis), this protein is DNA-directed RNA polymerase subunit omega (rpoZ).